The primary structure comprises 381 residues: Chaperone protein DnaJ (381 aa).

Positions 5-70 (DFYEVLGVSR…QKKAAYDQYG (66 aa)) constitute a J domain. The segment at 136-214 (GVTKEIEVPT…CHGQGRKQKT (79 aa)) adopts a CR-type zinc-finger fold. The Zn(2+) site is built by Cys149, Cys152, Cys166, Cys169, Cys188, Cys191, Cys202, and Cys205. 4 CXXCXGXG motif repeats span residues 149-156 (CDSCDGSG), 166-173 (CGTCHGHG), 188-195 (CPTCHGKG), and 202-209 (CNECHGQG).

This sequence belongs to the DnaJ family. As to quaternary structure, homodimer. Requires Zn(2+) as cofactor.

It is found in the cytoplasm. Participates actively in the response to hyperosmotic and heat shock by preventing the aggregation of stress-denatured proteins and by disaggregating proteins, also in an autonomous, DnaK-independent fashion. Unfolded proteins bind initially to DnaJ; upon interaction with the DnaJ-bound protein, DnaK hydrolyzes its bound ATP, resulting in the formation of a stable complex. GrpE releases ADP from DnaK; ATP binding to DnaK triggers the release of the substrate protein, thus completing the reaction cycle. Several rounds of ATP-dependent interactions between DnaJ, DnaK and GrpE are required for fully efficient folding. Also involved, together with DnaK and GrpE, in the DNA replication of plasmids through activation of initiation proteins. In Vibrio parahaemolyticus serotype O3:K6 (strain RIMD 2210633), this protein is Chaperone protein DnaJ.